The primary structure comprises 410 residues: Homeobox protein Hox-A3a (410 aa).

The interval 79–126 (VTDTSDNKQPPTAPSGPSSPSSLNQIPNIDSAAKNPVHVSPTPSTRKH) is disordered. Residues 127 to 132 (IFPWMK) carry the Antp-type hexapeptide motif. The homeobox DNA-binding region spans 163–222 (SKRARTAYTSAQLVELEKEFHFNRYLCRPRRVEMANLLNLTERQIKIWFQNRRMKYKKDQ). Residues 222 to 249 (QKGLGMMPSPGAQSPHSPVSLSSGGGGG) form a disordered region.

The protein belongs to the Antp homeobox family.

The protein resides in the nucleus. In terms of biological role, sequence-specific transcription factor which is part of a developmental regulatory system that provides cells with specific positional identities on the anterior-posterior axis. The sequence is that of Homeobox protein Hox-A3a (hoxa3a) from Danio rerio (Zebrafish).